Reading from the N-terminus, the 117-residue chain is Protein GL2-INTERACTING REPRESSOR 2 (117 aa).

The interval 1–56 is disordered; sequence MSRRNKNGPKLELRLNLSPPPSQASQMSLVRSPNRSNTTSPSSCVSSETNQEENET. Positions 10–15 match the EAR motif; the sequence is KLELRL. The span at 31–49 shows a compositional bias: low complexity; that stretch reads RSPNRSNTTSPSSCVSSET.

As to quaternary structure, interacts with GL2. Interacts with TPL.

The protein localises to the nucleus. Functionally, acts as a negative regulator of root hair development redundantly with GIR1. GIR1 and GIR2 may function as adapter proteins that associate with GL2 and participate in the control of root hair formation. GIR1 and GIR2 may function as adapter proteins that associate with TPL and participate in the repression of root gene expression. This Arabidopsis thaliana (Mouse-ear cress) protein is Protein GL2-INTERACTING REPRESSOR 2.